A 533-amino-acid polypeptide reads, in one-letter code: L-aspartate oxidase 1 (533 aa).

FAD-binding positions include 10-13 (SGLA), K32, 39-46 (ASDWAQGG), and D214. The Proton donor/acceptor role is filled by R281. Residues E366 and 382 to 383 (SL) each bind FAD.

It belongs to the FAD-dependent oxidoreductase 2 family. NadB subfamily. FAD is required as a cofactor.

The protein resides in the cytoplasm. The enzyme catalyses L-aspartate + O2 = iminosuccinate + H2O2. It participates in cofactor biosynthesis; NAD(+) biosynthesis; iminoaspartate from L-aspartate (oxidase route): step 1/1. Its function is as follows. Catalyzes the oxidation of L-aspartate to iminoaspartate, the first step in the de novo biosynthesis of NAD(+). The sequence is that of L-aspartate oxidase 1 (nadB1) from Ralstonia nicotianae (strain ATCC BAA-1114 / GMI1000) (Ralstonia solanacearum).